The sequence spans 465 residues: Polyadenylation factor subunit 2 (465 aa).

A compositionally biased stretch (low complexity) spans methionine 1–glutamine 20. A disordered region spans residues methionine 1–tyrosine 26. WD repeat units follow at residues alanine 133–glutamine 163, alanine 175–asparagine 205, glycine 217–aspartate 247, lysine 259–aspartate 290, and alanine 348–threonine 378. The disordered stretch occupies residues glutamate 417–isoleucine 465. The segment covering asparagine 454–isoleucine 465 has biased composition (polar residues).

Component of the cleavage and polyadenylation factor (CPF) complex, which is composed of at least PTI1, SYC1, SSU72, GLC7, MPE1, REF2, PFS2, PTA1, YSH1/BRR5, SWD2, CFT2/YDH1, YTH1, CFT1/YHH1, FIP1 and PAP1. Interacts with YSH1/BRR5, FIP1 and RNA14.

The protein localises to the nucleus. Integral and essential component of the cleavage and polyadenylation factor (CPF) complex, which plays a key role in polyadenylation-dependent pre-mRNA 3'-end formation and cooperates with cleavage factors including the CFIA complex and NAB4/CFIB. May bridge the CPF and CFIA complexes. In Saccharomyces cerevisiae (strain ATCC 204508 / S288c) (Baker's yeast), this protein is Polyadenylation factor subunit 2 (PFS2).